The chain runs to 189 residues: GTP cyclohydrolase 1 (189 aa).

Residues Cys78, His81, and Cys150 each coordinate Zn(2+).

The protein belongs to the GTP cyclohydrolase I family. In terms of assembly, toroid-shaped homodecamer, composed of two pentamers of five dimers.

The enzyme catalyses GTP + H2O = 7,8-dihydroneopterin 3'-triphosphate + formate + H(+). It functions in the pathway cofactor biosynthesis; 7,8-dihydroneopterin triphosphate biosynthesis; 7,8-dihydroneopterin triphosphate from GTP: step 1/1. This is GTP cyclohydrolase 1 from Listeria innocua serovar 6a (strain ATCC BAA-680 / CLIP 11262).